We begin with the raw amino-acid sequence, 418 residues long: FK506-binding protein 3 (418 aa).

3 disordered regions span residues 49–133, 172–273, and 289–309; these read PSTL…DDEF, SLTG…ETKK, and LEEG…KPKT. A compositionally biased stretch (acidic residues) spans 61-89; the sequence is YDDEDDAGGLLGDYDEDELDISEEEEEEE. Residues 93-103 show a composition bias toward basic residues; that stretch reads KSKKGKGKGKS. Acidic residues-rich tracts occupy residues 108–133 and 186–224; these read EEEE…DDEF and GYDD…DASD. Positions 225–239 are enriched in basic and acidic residues; the sequence is VEAKIQELVEKEQSK. The span at 251-264 shows a compositional bias: acidic residues; it reads PEEEEEEEEEEEEE. The PPIase FKBP-type domain maps to 332–418; the sequence is GSKVGMRYIG…TFDVKLVSLK (87 aa).

The protein belongs to the FKBP-type PPIase family. FKBP3/4 subfamily.

Its subcellular location is the nucleus. The protein resides in the nucleolus. The enzyme catalyses [protein]-peptidylproline (omega=180) = [protein]-peptidylproline (omega=0). With respect to regulation, inhibited by both FK506 and rapamycin. Functionally, PPIases accelerate the folding of proteins. It catalyzes the cis-trans isomerization of proline imidic peptide bonds in oligopeptides. This chain is FK506-binding protein 3 (FPR3), found in Kluyveromyces lactis (strain ATCC 8585 / CBS 2359 / DSM 70799 / NBRC 1267 / NRRL Y-1140 / WM37) (Yeast).